The following is a 946-amino-acid chain: DNA primase (946 aa).

The disordered stretch occupies residues 596-626 (RDTEEDEDGKENKNNVPDNGVFQKTTSSVDT). The segment covering 617–626 (FQKTTSSVDT) has biased composition (polar residues). A CHC2-type zinc finger spans residues 881 to 920 (CLNYTHRNPQETVQVFIDLRTEHSYALWASLWSRCFTKKC).

Belongs to the herpesviridae DNA primase family. Associates with the helicase and the primase-associated factor to form the helicase-primase factor. Interacts with host SNAPIN.

Its subcellular location is the host nucleus. Essential component of the helicase/primase complex. Unwinds the DNA at the replication forks and generates single-stranded DNA for both leading and lagging strand synthesis. The primase initiates primer synthesis and thereby produces large amount of short RNA primers on the lagging strand that the polymerase elongates using dNTPs. The sequence is that of DNA primase (UL70) from Homo sapiens (Human).